A 399-amino-acid chain; its full sequence is S-adenosylmethionine synthase (399 aa).

Residue 135–140 (GEGSTD) coordinates ATP.

Belongs to the AdoMet synthase 2 family. It depends on Mg(2+) as a cofactor.

The enzyme catalyses L-methionine + ATP + H2O = S-adenosyl-L-methionine + phosphate + diphosphate. It participates in amino-acid biosynthesis; S-adenosyl-L-methionine biosynthesis; S-adenosyl-L-methionine from L-methionine: step 1/1. Functionally, catalyzes the formation of S-adenosylmethionine from methionine and ATP. This chain is S-adenosylmethionine synthase (mat), found in Archaeoglobus fulgidus (strain ATCC 49558 / DSM 4304 / JCM 9628 / NBRC 100126 / VC-16).